Reading from the N-terminus, the 281-residue chain is Elongation factor 1-delta (281 aa).

Ala2 is modified (N-acetylalanine). An N6-acetyllysine modification is found at Lys17. 5 positions are modified to phosphoserine: Ser37, Ser44, Ser60, Ser86, and Ser106. A leucine-zipper region spans residues 80–115 (LIVRIASLEVENQNLRGVVQDLQQAISKLEVRLSTL). Position 107 is an N6-acetyllysine (Lys107). Residues 115–132 (LEKSSPTHRATAPQTQHV) are compositionally biased toward polar residues. Residues 115 to 172 (LEKSSPTHRATAPQTQHVSPMRQVEPPAKKGATPAEDDEDNDIDLFGSDEEEEDKEAA) are disordered. Lys117 carries the N6-acetyllysine; alternate modification. N6-succinyllysine; alternate is present on Lys117. At Ser119 the chain carries Phosphoserine. Thr129 is modified (phosphothreonine). Ser133 is subject to Phosphoserine. Residue Thr147 is modified to Phosphothreonine. Residues 149–169 (AEDDEDNDIDLFGSDEEEEDK) show a composition bias toward acidic residues. Ser162 carries the phosphoserine; by CK2 modification. A catalytic (GEF) region spans residues 173–281 (RLREERLRQY…SVDIAAFNKI (109 aa)).

Belongs to the EF-1-beta/EF-1-delta family. In terms of assembly, EF-1 is composed of 4 subunits: alpha, beta, delta isoform 1, and gamma. Isoform 2 interacts with HSF1 and NFE2L2.

It is found in the nucleus. EF-1-beta and EF-1-delta stimulate the exchange of GDP bound to EF-1-alpha to GTP, regenerating EF-1-alpha for another round of transfer of aminoacyl-tRNAs to the ribosome. Its function is as follows. Regulates induction of heat-shock-responsive genes through association with heat shock transcription factors and direct DNA-binding at heat shock promoter elements (HSE). In Rattus norvegicus (Rat), this protein is Elongation factor 1-delta (Eef1d).